The primary structure comprises 292 residues: GTP cyclohydrolase FolE2 (292 aa).

It belongs to the GTP cyclohydrolase IV family.

It catalyses the reaction GTP + H2O = 7,8-dihydroneopterin 3'-triphosphate + formate + H(+). The protein operates within cofactor biosynthesis; 7,8-dihydroneopterin triphosphate biosynthesis; 7,8-dihydroneopterin triphosphate from GTP: step 1/1. Functionally, converts GTP to 7,8-dihydroneopterin triphosphate. The protein is GTP cyclohydrolase FolE2 of Staphylococcus aureus (strain Mu50 / ATCC 700699).